Consider the following 434-residue polypeptide: Adenylosuccinate synthetase (434 aa).

GTP-binding positions include 22–28 (GDEGKGK) and 50–52 (GHT). Asp-23 acts as the Proton acceptor in catalysis. Mg(2+) contacts are provided by Asp-23 and Gly-50. IMP contacts are provided by residues 23–26 (DEGK), 48–51 (NAGH), Thr-139, Arg-153, Gln-234, Thr-249, and Arg-313. Catalysis depends on His-51, which acts as the Proton donor. 309-315 (ATTGRKR) provides a ligand contact to substrate. Residues Arg-315, 341 to 343 (KLD), and 423 to 425 (SVG) each bind GTP.

The protein belongs to the adenylosuccinate synthetase family. In terms of assembly, homodimer. The cofactor is Mg(2+).

The protein resides in the cytoplasm. It carries out the reaction IMP + L-aspartate + GTP = N(6)-(1,2-dicarboxyethyl)-AMP + GDP + phosphate + 2 H(+). It functions in the pathway purine metabolism; AMP biosynthesis via de novo pathway; AMP from IMP: step 1/2. In terms of biological role, plays an important role in the de novo pathway of purine nucleotide biosynthesis. Catalyzes the first committed step in the biosynthesis of AMP from IMP. The chain is Adenylosuccinate synthetase from Chlorobium limicola (strain DSM 245 / NBRC 103803 / 6330).